The chain runs to 1004 residues: Bifunctional glutamine synthetase adenylyltransferase/adenylyl-removing enzyme (1004 aa).

The segment at M1 to L497 is adenylyl removase. An adenylyl transferase region spans residues G502–S1004.

It belongs to the GlnE family. Mg(2+) is required as a cofactor.

It catalyses the reaction [glutamine synthetase]-O(4)-(5'-adenylyl)-L-tyrosine + phosphate = [glutamine synthetase]-L-tyrosine + ADP. The enzyme catalyses [glutamine synthetase]-L-tyrosine + ATP = [glutamine synthetase]-O(4)-(5'-adenylyl)-L-tyrosine + diphosphate. Its function is as follows. Involved in the regulation of glutamine synthetase GlnA, a key enzyme in the process to assimilate ammonia. When cellular nitrogen levels are high, the C-terminal adenylyl transferase (AT) inactivates GlnA by covalent transfer of an adenylyl group from ATP to specific tyrosine residue of GlnA, thus reducing its activity. Conversely, when nitrogen levels are low, the N-terminal adenylyl removase (AR) activates GlnA by removing the adenylyl group by phosphorolysis, increasing its activity. The regulatory region of GlnE binds the signal transduction protein PII (GlnB) which indicates the nitrogen status of the cell. This Mycobacterium leprae (strain TN) protein is Bifunctional glutamine synthetase adenylyltransferase/adenylyl-removing enzyme.